The following is a 346-amino-acid chain: Phosphoribosylformylglycinamidine cyclo-ligase (346 aa).

It belongs to the AIR synthase family.

The protein localises to the cytoplasm. It catalyses the reaction 2-formamido-N(1)-(5-O-phospho-beta-D-ribosyl)acetamidine + ATP = 5-amino-1-(5-phospho-beta-D-ribosyl)imidazole + ADP + phosphate + H(+). Its pathway is purine metabolism; IMP biosynthesis via de novo pathway; 5-amino-1-(5-phospho-D-ribosyl)imidazole from N(2)-formyl-N(1)-(5-phospho-D-ribosyl)glycinamide: step 2/2. The chain is Phosphoribosylformylglycinamidine cyclo-ligase from Bacillus velezensis (strain DSM 23117 / BGSC 10A6 / LMG 26770 / FZB42) (Bacillus amyloliquefaciens subsp. plantarum).